Consider the following 231-residue polypeptide: Probable pseudouridine-5'-phosphatase (231 aa).

Asp15 functions as the Nucleophile in the catalytic mechanism. Mg(2+)-binding residues include Asp15 and Asp17. Catalysis depends on Asp17, which acts as the Proton donor.

Belongs to the HAD-like hydrolase superfamily. CbbY/CbbZ/Gph/YieH family. It depends on Mg(2+) as a cofactor.

It carries out the reaction psi-UMP + H2O = pseudouridine + phosphate. Dephosphorylates pseudouridine 5'-phosphate, a potential intermediate in rRNA degradation. This is Probable pseudouridine-5'-phosphatase (Gs1l) from Drosophila melanogaster (Fruit fly).